The following is an 84-amino-acid chain: U-scoloptoxin(10)-Er1a (84 aa).

Positions 1–24 are cleaved as a signal peptide; the sequence is MSRFCLLFVAFGFVLYFLHMEVTG.

This sequence belongs to the scoloptoxin-10 family. Contains 3 disulfide bonds. As to expression, expressed by the venom gland.

The protein resides in the secreted. The chain is U-scoloptoxin(10)-Er1a from Ethmostigmus rubripes (Giant centipede).